Consider the following 152-residue polypeptide: Small ribosomal subunit protein bS6 (152 aa).

Residues 94 to 152 form a disordered region; the sequence is VKQEGPLPTPKPSNKSSTQSENKDNPETKVESKEEQSVTNSDTSTTKKDDNEIKENTES. 2 stretches are compositionally biased toward basic and acidic residues: residues 114–129 and 138–152; these read ENKD…KEEQ and TTKK…NTES.

This sequence belongs to the bacterial ribosomal protein bS6 family.

Binds together with bS18 to 16S ribosomal RNA. The chain is Small ribosomal subunit protein bS6 from Prochlorococcus marinus (strain MIT 9312).